Reading from the N-terminus, the 403-residue chain is Phosphopentomutase (403 aa).

6 residues coordinate Mn(2+): aspartate 13, aspartate 298, histidine 303, aspartate 339, histidine 340, and histidine 351.

It belongs to the phosphopentomutase family. Mn(2+) is required as a cofactor.

It localises to the cytoplasm. It catalyses the reaction 2-deoxy-alpha-D-ribose 1-phosphate = 2-deoxy-D-ribose 5-phosphate. The catalysed reaction is alpha-D-ribose 1-phosphate = D-ribose 5-phosphate. It participates in carbohydrate degradation; 2-deoxy-D-ribose 1-phosphate degradation; D-glyceraldehyde 3-phosphate and acetaldehyde from 2-deoxy-alpha-D-ribose 1-phosphate: step 1/2. Functionally, isomerase that catalyzes the conversion of deoxy-ribose 1-phosphate (dRib-1-P) and ribose 1-phosphate (Rib-1-P) to deoxy-ribose 5-phosphate (dRib-5-P) and ribose 5-phosphate (Rib-5-P), respectively. The polypeptide is Phosphopentomutase (Streptococcus pneumoniae serotype 4 (strain ATCC BAA-334 / TIGR4)).